Here is an 822-residue protein sequence, read N- to C-terminus: Collagen alpha chain CG42342 (822 aa).

Disordered regions lie at residues 1–45 (MRKH…VEAP) and 66–99 (RLAPPPCQHPINNSNNNSNISNNSSNSSSSKERP). Residues 1–104 (MRKHKAPPSG…SKERPRPTVR (104 aa)) lie on the Cytoplasmic side of the membrane. Positions 11–25 (SPRTMAQDNSQSEPS) are enriched in polar residues. Positions 76 to 94 (INNSNNNSNISNNSSNSSS) are enriched in low complexity. Residues 105-125 (FISLLHVASYVLCLCAFSFAL) traverse the membrane as a helical; Signal-anchor for type II membrane protein segment. Over 126-822 (YGNVRQTRLE…EYQDNLHNNE (697 aa)) the chain is Extracellular. Positions 131 to 162 (QTRLEQRMQRLQQLDARIVELELRLEQQQLLH) form a coiled coil. 3 disordered regions span residues 169 to 188 (QVLASHPSDRDSSNSNNGSQ), 205 to 297 (VSHL…GHPG), and 345 to 822 (LKGE…HNNE). Residues 194-222 (VRRELHRLRRDVSHLQLTRRQQRRQAAEA) are a coiled coil. Collagen-like domains are found at residues 241–299 (QPGP…PGMD), 350–409 (GEPG…KGDR), 430–469 (GPPGPAGPPGPPGEPGARGEPGPIGPAGPPGEKGPRGKRG), 493–526 (RGPPGPPGIAGKDGRDGRDGSKGEPGEPGEPGSL), 527–586 (GPRG…KGDK), 621–680 (GPPG…SGKA), and 681–740 (GIPG…KGEQ). Over residues 242-251 (PGPPGPPGPP) the composition is skewed to pro residues. Residues 284 to 293 (PGDKGQKGDV) show a composition bias toward basic and acidic residues. The segment covering 360 to 402 (EAGQPGAPGERGPPGEIGAQGPQGEAGQPGVAGPPGVAGAPGT) has biased composition (low complexity). Over residues 403 to 412 (KGDKGDRGDR) the composition is skewed to basic and acidic residues. Positions 431–443 (PPGPAGPPGPPGE) are enriched in pro residues. Positions 504-517 (KDGRDGRDGSKGEP) are enriched in basic and acidic residues. The segment covering 522–540 (EPGSLGPRGLDGLPGEPGI) has biased composition (low complexity). Over residues 567 to 579 (LMGPPGLPGPPGY) the composition is skewed to pro residues. Residues 583-602 (KGDKGDRGDSYRKMRRRQDD) show a composition bias toward basic and acidic residues. Over residues 619–628 (PPGPPGPMGP) the composition is skewed to pro residues. Basic and acidic residues predominate over residues 638–655 (RGLDGRKGDPGEKGHKGD). Low complexity predominate over residues 658 to 668 (PMGLPGPMGMR). Positions 790-822 (TSDYEQEEEEDDEQAEDNENEYDEYQDNLHNNE) form a coiled coil. A compositionally biased stretch (acidic residues) spans 793–815 (YEQEEEEDDEQAEDNENEYDEYQ).

It localises to the cell membrane. This is Collagen alpha chain CG42342 from Drosophila melanogaster (Fruit fly).